The primary structure comprises 298 residues: Porphobilinogen deaminase (298 aa).

S-(dipyrrolylmethanemethyl)cysteine is present on Cys242.

This sequence belongs to the HMBS family. In terms of assembly, monomer. Requires dipyrromethane as cofactor.

It carries out the reaction 4 porphobilinogen + H2O = hydroxymethylbilane + 4 NH4(+). It functions in the pathway porphyrin-containing compound metabolism; protoporphyrin-IX biosynthesis; coproporphyrinogen-III from 5-aminolevulinate: step 2/4. In terms of biological role, tetrapolymerization of the monopyrrole PBG into the hydroxymethylbilane pre-uroporphyrinogen in several discrete steps. The polypeptide is Porphobilinogen deaminase (Fusobacterium nucleatum subsp. nucleatum (strain ATCC 25586 / DSM 15643 / BCRC 10681 / CIP 101130 / JCM 8532 / KCTC 2640 / LMG 13131 / VPI 4355)).